A 268-amino-acid chain; its full sequence is Ribosomal RNA small subunit methyltransferase A (268 aa).

S-adenosyl-L-methionine-binding residues include Asn18, Leu20, Gly45, Glu66, Asp91, and Asn112.

This sequence belongs to the class I-like SAM-binding methyltransferase superfamily. rRNA adenine N(6)-methyltransferase family. RsmA subfamily.

Its subcellular location is the cytoplasm. The catalysed reaction is adenosine(1518)/adenosine(1519) in 16S rRNA + 4 S-adenosyl-L-methionine = N(6)-dimethyladenosine(1518)/N(6)-dimethyladenosine(1519) in 16S rRNA + 4 S-adenosyl-L-homocysteine + 4 H(+). Specifically dimethylates two adjacent adenosines (A1518 and A1519) in the loop of a conserved hairpin near the 3'-end of 16S rRNA in the 30S particle. May play a critical role in biogenesis of 30S subunits. This chain is Ribosomal RNA small subunit methyltransferase A, found in Pseudoalteromonas translucida (strain TAC 125).